We begin with the raw amino-acid sequence, 325 residues long: G/U mismatch-specific uracil DNA glycosylase (325 aa).

Residues 1-11 are compositionally biased toward basic and acidic residues; sequence MNDIETRDTGT. A disordered region spans residues 1–50; the sequence is MNDIETRDTGTKNDNSSEFNLSVKSHKRKRSFDDENLELEESREETSGGI. Polar residues predominate over residues 12–23; sequence KNDNSSEFNLSV. Positions 34 to 43 are enriched in acidic residues; the sequence is DENLELEESR.

This sequence belongs to the uracil-DNA glycosylase (UDG) superfamily. TDG/mug family.

Its subcellular location is the nucleus. The enzyme catalyses Specifically hydrolyzes mismatched double-stranded DNA and polynucleotides, releasing free uracil.. Its function is as follows. Removes uracil from G/U mispairs in ssDNA. Also corrects G/G mispairs. Does not catalyze the removal of thymine from G/T mispairs. In Schizosaccharomyces pombe (strain 972 / ATCC 24843) (Fission yeast), this protein is G/U mismatch-specific uracil DNA glycosylase (thp1).